A 599-amino-acid polypeptide reads, in one-letter code: MTTKEKDEFNIGSLQNSPESSTNMSPDVITTPISKWQAFKDSFKPPEQKPLASSSSSTSSLSASSPHHNDVANNYDIEKSLRPDQQGELKRELKNRHVQMIALGGSVGTGLLIGSGGALHQGGPAALLIAWGITGTMVFCIIHSLGELCVAFPVNGAFSTYANMFVDSSWAFAVGWNYAIMWLIVLPLELVAAAMCITYWNDEINPASWVAIFYVLIVVINIFGVKYYGDAEMYLTIFKIIAIVGFIILGVVLVCGGGPTHEFIGNKYWKQDGAFANGFKGVATTFVTASYSMAGSEMVGLASAEVANPQKSLPKAIRQVFWRIFLFYFLSLTFIGLLVPSNSPQLLGASGTSASPFVIAIKNGGIYALPSIFNACILLSVLSVGNSAVYGCSRTIQSLGAQGLGPKIFAYVDRKGRPLGGLVMSAIFGLLCFLSAYHDEATIFNWLLSVAGLATIFSWFNIGLCHVRFRLALRKQGRSLQELTFTALTGVWGSVYSMIFLCVVLVIQFWTALFPLGSKGKANAENFFQNYLGAVVILIFYVGHKLYTRNWKLCVKLEDIDLDSGRRSFDLDLIRAEIEEEKAANKAKPLYKRLWNYWC.

Residues 1-80 (MTTKEKDEFN…VANNYDIEKS (80 aa)) form a disordered region. The span at 12-25 (GSLQNSPESSTNMS) shows a compositional bias: polar residues. Low complexity predominate over residues 51-65 (LASSSSSTSSLSASS). 12 consecutive transmembrane segments (helical) span residues 100-120 (MIAL…GALH), 122-142 (GGPA…FCII), 146-166 (GELC…NMFV), 180-200 (IMWL…ITYW), 204-224 (INPA…NIFG), 235-255 (LTIF…VLVC), 320-340 (VFWR…LLVP), 364-384 (GGIY…VLSV), 418-438 (PLGG…SAYH), 443-463 (IFNW…FNIG), 487-507 (ALTG…VLVI), and 527-547 (FFQN…HKLY).

Belongs to the amino acid-polyamine-organocation (APC) superfamily. YAT (TC 2.A.3.10) family.

It localises to the cell membrane. Functionally, amino-acid permease that is able to transport phenylalanine. This chain is Amino-acid permease GAP3 (HIP1), found in Candida albicans (strain SC5314 / ATCC MYA-2876) (Yeast).